The sequence spans 274 residues: uncharacterized protein (274 aa).

Positions 235 to 274 (ETFDTQQDPKKTPETDKNAAYKGKEKKGKKEERGPRSIMK) are disordered. The segment covering 241–274 (QDPKKTPETDKNAAYKGKEKKGKKEERGPRSIMK) has biased composition (basic and acidic residues).

This is an uncharacterized protein from Treponema pallidum (strain Nichols).